The following is a 222-amino-acid chain: Glutathione S-transferase A1 (222 aa).

Met1 carries the post-translational modification N-acetylmethionine. At Ala2 the chain carries N-acetylalanine; in Glutathione S-transferase A1, N-terminally processed. A GST N-terminal domain is found at 3 to 83 (GKPTLHYFNG…YIATKYNLYG (81 aa)). At Lys4 the chain carries N6-succinyllysine. Glutathione is bound by residues Tyr9, Lys45, 54–55 (QV), and 67–68 (QT). The GST C-terminal domain occupies 85–208 (DMKERALIDM…QPGSQRKPPT (124 aa)).

This sequence belongs to the GST superfamily. Alpha family. As to quaternary structure, homodimer or heterodimer of GSTA1 and GSTA2. As to expression, expressed in corpus luteum, adrenal gland, testis, liver, lung, thyroid and kidney.

The protein resides in the cytoplasm. The enzyme catalyses RX + glutathione = an S-substituted glutathione + a halide anion + H(+). It carries out the reaction prostaglandin A2 + glutathione = prostaglandin A2-S-(R)-glutathione. The catalysed reaction is prostaglandin J2 + glutathione = prostaglandin J2-S-(R)-glutathione. It catalyses the reaction (13S)-hydroperoxy-(9Z,11E)-octadecadienoate + 2 glutathione = (13S)-hydroxy-(9Z,11E)-octadecadienoate + glutathione disulfide + H2O. The enzyme catalyses androst-5-ene-3,17-dione = androst-4-ene-3,17-dione. In terms of biological role, glutathione S-transferase that catalyzes the nucleophilic attack of the sulfur atom of glutathione on the electrophilic groups of a wide range of exogenous and endogenous compounds. Involved in the formation of glutathione conjugates of both prostaglandin A2 (PGA2) and prostaglandin J2 (PGJ2). It also catalyzes the isomerization of D5-androstene-3,17-dione (AD) into D4-androstene-3,17-dione and may therefore play an important role in hormone biosynthesis. Through its glutathione-dependent peroxidase activity toward the fatty acid hydroperoxide (13S)-hydroperoxy-(9Z,11E)-octadecadienoate/13-HPODE it is also involved in the metabolism of oxidized linoleic acid. The polypeptide is Glutathione S-transferase A1 (GSTA1) (Bos taurus (Bovine)).